Here is a 165-residue protein sequence, read N- to C-terminus: MLMYQVKPGETLESIAADFRTTRQALLQANPGLNGGQVSAGQSIIIPGIRNPDTIPYRIAVSLNGRTLRLYERDRLVKTYPIAVGKILTQTPRGEFVIVNRQPNPGGPFGAYWLSLSKQHYGIHGTNNPSSIGKAVSRGCIRMHNRDVLELASIVPNGTRVSITP.

Residues 2–46 enclose the LysM domain; sequence LMYQVKPGETLESIAADFRTTRQALLQANPGLNGGQVSAGQSIII. Residues 57 to 164 form the L,D-TPase catalytic domain; sequence YRIAVSLNGR…VPNGTRVSIT (108 aa). H124 functions as the Proton donor/acceptor in the catalytic mechanism. The active-site Nucleophile is C140.

It belongs to the YkuD family. In terms of assembly, monomer.

Its subcellular location is the spore wall. It functions in the pathway cell wall biogenesis; peptidoglycan biosynthesis. In terms of biological role, probable enzyme that may play an important role in cell wall biology. This chain is Putative L,D-transpeptidase YkuD, found in Bacillus licheniformis (strain ATCC 14580 / DSM 13 / JCM 2505 / CCUG 7422 / NBRC 12200 / NCIMB 9375 / NCTC 10341 / NRRL NRS-1264 / Gibson 46).